Reading from the N-terminus, the 398-residue chain is 4-hydroxy-3-methylbut-2-en-1-yl diphosphate synthase (ferredoxin) (398 aa).

The [4Fe-4S] cluster site is built by Cys-306, Cys-309, Cys-340, and Glu-347.

This sequence belongs to the IspG family. Requires [4Fe-4S] cluster as cofactor.

The enzyme catalyses (2E)-4-hydroxy-3-methylbut-2-enyl diphosphate + 2 oxidized [2Fe-2S]-[ferredoxin] + H2O = 2-C-methyl-D-erythritol 2,4-cyclic diphosphate + 2 reduced [2Fe-2S]-[ferredoxin] + H(+). It functions in the pathway isoprenoid biosynthesis; isopentenyl diphosphate biosynthesis via DXP pathway; isopentenyl diphosphate from 1-deoxy-D-xylulose 5-phosphate: step 5/6. Its function is as follows. Converts 2C-methyl-D-erythritol 2,4-cyclodiphosphate (ME-2,4cPP) into 1-hydroxy-2-methyl-2-(E)-butenyl 4-diphosphate. This is 4-hydroxy-3-methylbut-2-en-1-yl diphosphate synthase (ferredoxin) from Parasynechococcus marenigrum (strain WH8102).